A 245-amino-acid polypeptide reads, in one-letter code: Ribonuclease PH (245 aa).

Residues arginine 86 and 124 to 126 (GTR) contribute to the phosphate site.

The protein belongs to the RNase PH family. In terms of assembly, homohexameric ring arranged as a trimer of dimers.

It catalyses the reaction tRNA(n+1) + phosphate = tRNA(n) + a ribonucleoside 5'-diphosphate. Phosphorolytic 3'-5' exoribonuclease that plays an important role in tRNA 3'-end maturation. Removes nucleotide residues following the 3'-CCA terminus of tRNAs; can also add nucleotides to the ends of RNA molecules by using nucleoside diphosphates as substrates, but this may not be physiologically important. Probably plays a role in initiation of 16S rRNA degradation (leading to ribosome degradation) during starvation. The protein is Ribonuclease PH of Bacillus cereus (strain G9842).